Here is a 186-residue protein sequence, read N- to C-terminus: Mitoferrin-2A (186 aa).

The Solcar repeat unit spans residues 75–163 (SNVTTHMLAG…FACYEKLKKT (89 aa)). The next 3 membrane-spanning stretches (helical) occupy residues 77–96 (VTTH…CLMY), 137–157 (RGLN…FACY), and 172–185 (GNSH…YSCP).

This sequence belongs to the mitochondrial carrier (TC 2.A.29) family.

The protein resides in the mitochondrion inner membrane. It carries out the reaction Fe(2+)(in) = Fe(2+)(out). Functionally, mitochondrial iron transporter that mediates iron uptake. Probably required for heme synthesis of hemoproteins and Fe-S cluster assembly in non-erythroid cells. This Xenopus laevis (African clawed frog) protein is Mitoferrin-2A (slc25a28-a).